A 130-amino-acid polypeptide reads, in one-letter code: Small ribosomal subunit protein uS9 (130 aa).

The interval 111 to 130 (VERKKVGLRKARRRPQFSKR) is disordered. Residues 116–130 (VGLRKARRRPQFSKR) are compositionally biased toward basic residues.

It belongs to the universal ribosomal protein uS9 family.

This Enterobacter sp. (strain 638) protein is Small ribosomal subunit protein uS9.